A 234-amino-acid chain; its full sequence is GTP cyclohydrolase 1 type 2 homolog (234 aa).

A divalent metal cation contacts are provided by histidine 61, histidine 62, aspartate 80, histidine 195, and glutamate 199.

It belongs to the GTP cyclohydrolase I type 2/NIF3 family. In terms of assembly, homohexamer.

The polypeptide is GTP cyclohydrolase 1 type 2 homolog (Methanothermobacter thermautotrophicus (strain ATCC 29096 / DSM 1053 / JCM 10044 / NBRC 100330 / Delta H) (Methanobacterium thermoautotrophicum)).